Reading from the N-terminus, the 256-residue chain is Trans-aconitate 2-methyltransferase (256 aa).

It belongs to the methyltransferase superfamily. Tam family.

It is found in the cytoplasm. The catalysed reaction is trans-aconitate + S-adenosyl-L-methionine = (E)-3-(methoxycarbonyl)pent-2-enedioate + S-adenosyl-L-homocysteine. Its function is as follows. Catalyzes the S-adenosylmethionine monomethyl esterification of trans-aconitate. The polypeptide is Trans-aconitate 2-methyltransferase (Rhizobium leguminosarum bv. trifolii (strain WSM2304)).